We begin with the raw amino-acid sequence, 156 residues long: Small ribosomal subunit protein uS7c (156 aa).

This sequence belongs to the universal ribosomal protein uS7 family. As to quaternary structure, part of the 30S ribosomal subunit.

Its subcellular location is the plastid. The protein resides in the chloroplast. Functionally, one of the primary rRNA binding proteins, it binds directly to 16S rRNA where it nucleates assembly of the head domain of the 30S subunit. This is Small ribosomal subunit protein uS7c (rps7) from Porphyra purpurea (Red seaweed).